The following is a 101-amino-acid chain: MIPGEYQLAEGDILANVGRKTVKIEVTNSGDRPIQVGSHYHFFETNNALKFDRTLARGMRLNVPSGNAVRFEPGEVKSVELVAFGGNQIIYGFHNQIDGKL.

This sequence belongs to the urease beta subunit family. In terms of assembly, heterotrimer of UreA (gamma), UreB (beta) and UreC (alpha) subunits. Three heterotrimers associate to form the active enzyme.

It localises to the cytoplasm. The enzyme catalyses urea + 2 H2O + H(+) = hydrogencarbonate + 2 NH4(+). It functions in the pathway nitrogen metabolism; urea degradation; CO(2) and NH(3) from urea (urease route): step 1/1. The sequence is that of Urease subunit beta from Haemophilus influenzae (strain 86-028NP).